A 284-amino-acid polypeptide reads, in one-letter code: Serine protease 57 (284 aa).

The signal sequence occupies residues 1–35 (MPSSTAMVPGTRGGWHCLVLTTAAALTQLMWLPGC). Residues 40-269 (IVGGHEVTPH…FVTWIWDVVR (230 aa)) form the Peptidase S1 domain. Cysteine 65 and cysteine 81 are oxidised to a cystine. Catalysis depends on charge relay system residues histidine 80 and aspartate 128. Residue asparagine 135 is glycosylated (N-linked (GlcNAc...) asparagine). 3 disulfide bridges follow: cysteine 163–cysteine 230, cysteine 194–cysteine 208, and cysteine 220–cysteine 245. The Charge relay system role is filled by serine 224.

It belongs to the peptidase S1 family. After cleavage of the signal peptide, the N-terminus is probably further processed by CTSC. Processing by CTSC is probably required for accumulation in cytoplasmic granules; in the absence of CTSC the protein does not accumulate. Post-translationally, N-glycosylated.

It localises to the cytoplasmic granule lumen. It is found in the secreted. In terms of biological role, serine protease that cleaves preferentially after Arg residues. Can also cleave after citrulline (deimidated arginine) and methylarginine residues. The chain is Serine protease 57 (Prss57) from Mus musculus (Mouse).